The primary structure comprises 33 residues: Defensin-1 (33 aa).

Cystine bridges form between Cys4/Cys32, Cys6/Cys21, and Cys11/Cys31.

It belongs to the alpha-defensin family.

Its subcellular location is the secreted. Its function is as follows. Has antibacterial activity against the Gram-negative bacterium E.coli and the Gram-positive bacteria L.monocytogenes and S.aureus. Has antifungal activity against C.albicans. This Papio hamadryas (Hamadryas baboon) protein is Defensin-1.